Here is a 128-residue protein sequence, read N- to C-terminus: Small ribosomal subunit protein uS11 (128 aa).

It belongs to the universal ribosomal protein uS11 family. Part of the 30S ribosomal subunit. Interacts with proteins S7 and S18. Binds to IF-3.

Its function is as follows. Located on the platform of the 30S subunit, it bridges several disparate RNA helices of the 16S rRNA. Forms part of the Shine-Dalgarno cleft in the 70S ribosome. The chain is Small ribosomal subunit protein uS11 from Synechococcus sp. (strain JA-2-3B'a(2-13)) (Cyanobacteria bacterium Yellowstone B-Prime).